Reading from the N-terminus, the 288-residue chain is Thymidylate synthase (288 aa).

Arginine 21 contacts dUMP. A (6R)-5,10-methylene-5,6,7,8-tetrahydrofolate-binding site is contributed by asparagine 51. 150-151 (RR) provides a ligand contact to dUMP. Cysteine 170 acts as the Nucleophile in catalysis. Residues 190–193 (RSGD), asparagine 201, and 231–233 (HIY) each bind dUMP. (6R)-5,10-methylene-5,6,7,8-tetrahydrofolate is bound at residue aspartate 193. Alanine 287 is a (6R)-5,10-methylene-5,6,7,8-tetrahydrofolate binding site.

The protein belongs to the thymidylate synthase family. Bacterial-type ThyA subfamily. Homodimer.

The protein localises to the cytoplasm. The catalysed reaction is dUMP + (6R)-5,10-methylene-5,6,7,8-tetrahydrofolate = 7,8-dihydrofolate + dTMP. The protein operates within pyrimidine metabolism; dTTP biosynthesis. Functionally, catalyzes the reductive methylation of 2'-deoxyuridine-5'-monophosphate (dUMP) to 2'-deoxythymidine-5'-monophosphate (dTMP) while utilizing 5,10-methylenetetrahydrofolate (mTHF) as the methyl donor and reductant in the reaction, yielding dihydrofolate (DHF) as a by-product. This enzymatic reaction provides an intracellular de novo source of dTMP, an essential precursor for DNA biosynthesis. The protein is Thymidylate synthase of Aster yellows witches'-broom phytoplasma (strain AYWB).